The chain runs to 546 residues: Probable T-complex protein 1 subunit theta (546 aa).

The tract at residues 527-546 is disordered; sequence MSKPAGGPKPPGPNPHWDDD.

It belongs to the TCP-1 chaperonin family. As to quaternary structure, heterooligomeric complex of about 850 to 900 kDa that forms two stacked rings, 12 to 16 nm in diameter.

The protein resides in the cytoplasm. Functionally, molecular chaperone; assists the folding of proteins upon ATP hydrolysis. Known to play a role, in vitro, in the folding of actin and tubulin. This is Probable T-complex protein 1 subunit theta (cct8) from Schizosaccharomyces pombe (strain 972 / ATCC 24843) (Fission yeast).